Reading from the N-terminus, the 347-residue chain is Gamma-glutamyl hydrolase 2 (347 aa).

A signal peptide spans 1 to 22 (MWSYVWLPLVALSLFKDSIIMA). Residues 45–341 (APDPNLNYRP…IGYDEVYIFT (297 aa)) enclose the Gamma-glutamyl hydrolase domain. Cys-155 serves as the catalytic Nucleophile. His-268 functions as the Proton donor in the catalytic mechanism.

The protein belongs to the peptidase C26 family. In terms of tissue distribution, expressed in roots, in leaves, stems and siliques.

The protein localises to the vacuole. The protein resides in the secreted. It is found in the extracellular space. Its subcellular location is the cell wall. The enzyme catalyses (6S)-5,6,7,8-tetrahydrofolyl-(gamma-L-Glu)(n) + (n-1) H2O = (6S)-5,6,7,8-tetrahydrofolate + (n-1) L-glutamate. Functionally, cleaves the polyglutamate sidechains of folate polyglutamates in the vacuole. Is important for polyglutamyl tail length determination before vacuolar exit. Plays a role on folate stability and intracellular folate content. Has endopeptidase activity against 4-amino-10-methylpteroyl penta-, tetra-, tri- and di-gamma-L-glutamate substrates and is responsible for the production of folic acid, also called pteroylglutamic acid (PteGlu) from teroylpolyglutamates. This chain is Gamma-glutamyl hydrolase 2 (GGH2), found in Arabidopsis thaliana (Mouse-ear cress).